Here is a 580-residue protein sequence, read N- to C-terminus: Arginine--tRNA ligase (580 aa).

The 'HIGH' region signature appears at 131–141 (ANPTGPMHVGH).

The protein belongs to the class-I aminoacyl-tRNA synthetase family. As to quaternary structure, monomer.

The protein localises to the cytoplasm. It catalyses the reaction tRNA(Arg) + L-arginine + ATP = L-arginyl-tRNA(Arg) + AMP + diphosphate. This chain is Arginine--tRNA ligase, found in Cereibacter sphaeroides (strain ATCC 17025 / ATH 2.4.3) (Rhodobacter sphaeroides).